Consider the following 248-residue polypeptide: 2,3-bisphosphoglycerate-dependent phosphoglycerate mutase (248 aa).

Substrate is bound by residues 7–14 (RHGESIWN), 20–21 (TG), arginine 59, 86–89 (ERHY), lysine 97, 113–114 (RR), and 182–183 (GN). The active-site Tele-phosphohistidine intermediate is the histidine 8. Residue glutamate 86 is the Proton donor/acceptor of the active site.

This sequence belongs to the phosphoglycerate mutase family. BPG-dependent PGAM subfamily.

It carries out the reaction (2R)-2-phosphoglycerate = (2R)-3-phosphoglycerate. Its pathway is carbohydrate degradation; glycolysis; pyruvate from D-glyceraldehyde 3-phosphate: step 3/5. Catalyzes the interconversion of 2-phosphoglycerate and 3-phosphoglycerate. The chain is 2,3-bisphosphoglycerate-dependent phosphoglycerate mutase from Methylacidiphilum infernorum (isolate V4) (Methylokorus infernorum (strain V4)).